The primary structure comprises 60 residues: Large ribosomal subunit protein uL30 (60 aa).

It belongs to the universal ribosomal protein uL30 family. Part of the 50S ribosomal subunit.

This Cupriavidus metallidurans (strain ATCC 43123 / DSM 2839 / NBRC 102507 / CH34) (Ralstonia metallidurans) protein is Large ribosomal subunit protein uL30.